A 379-amino-acid chain; its full sequence is Queuine tRNA-ribosyltransferase (379 aa).

The active-site Proton acceptor is the D94. Substrate-binding positions include 94-98 (DSGGF), D148, Q191, and G218. The interval 249 to 255 (GVGSPDS) is RNA binding. The Nucleophile role is filled by D268. Positions 273-277 (TRIAR) are RNA binding; important for wobble base 34 recognition. Zn(2+)-binding residues include C306, C308, C311, and H337.

The protein belongs to the queuine tRNA-ribosyltransferase family. Homodimer. Within each dimer, one monomer is responsible for RNA recognition and catalysis, while the other monomer binds to the replacement base PreQ1. Zn(2+) serves as cofactor.

The enzyme catalyses 7-aminomethyl-7-carbaguanine + guanosine(34) in tRNA = 7-aminomethyl-7-carbaguanosine(34) in tRNA + guanine. The protein operates within tRNA modification; tRNA-queuosine biosynthesis. In terms of biological role, catalyzes the base-exchange of a guanine (G) residue with the queuine precursor 7-aminomethyl-7-deazaguanine (PreQ1) at position 34 (anticodon wobble position) in tRNAs with GU(N) anticodons (tRNA-Asp, -Asn, -His and -Tyr). Catalysis occurs through a double-displacement mechanism. The nucleophile active site attacks the C1' of nucleotide 34 to detach the guanine base from the RNA, forming a covalent enzyme-RNA intermediate. The proton acceptor active site deprotonates the incoming PreQ1, allowing a nucleophilic attack on the C1' of the ribose to form the product. After dissociation, two additional enzymatic reactions on the tRNA convert PreQ1 to queuine (Q), resulting in the hypermodified nucleoside queuosine (7-(((4,5-cis-dihydroxy-2-cyclopenten-1-yl)amino)methyl)-7-deazaguanosine). The chain is Queuine tRNA-ribosyltransferase from Bacillus mycoides (strain KBAB4) (Bacillus weihenstephanensis).